A 205-amino-acid chain; its full sequence is Small ribosomal subunit protein uS4 (205 aa).

One can recognise an S4 RNA-binding domain in the interval Arg-95–Pro-163.

It belongs to the universal ribosomal protein uS4 family. Part of the 30S ribosomal subunit. Contacts protein S5. The interaction surface between S4 and S5 is involved in control of translational fidelity.

Functionally, one of the primary rRNA binding proteins, it binds directly to 16S rRNA where it nucleates assembly of the body of the 30S subunit. In terms of biological role, with S5 and S12 plays an important role in translational accuracy. This Persephonella marina (strain DSM 14350 / EX-H1) protein is Small ribosomal subunit protein uS4.